The primary structure comprises 224 residues: Deoxyribose-phosphate aldolase (224 aa).

Catalysis depends on aspartate 94, which acts as the Proton donor/acceptor. The active-site Schiff-base intermediate with acetaldehyde is the lysine 158. Lysine 187 acts as the Proton donor/acceptor in catalysis.

It belongs to the DeoC/FbaB aldolase family. DeoC type 1 subfamily. Homodimer.

It localises to the cytoplasm. The enzyme catalyses 2-deoxy-D-ribose 5-phosphate = D-glyceraldehyde 3-phosphate + acetaldehyde. Activated by citrate. Inhibited by NaBH(4). Activity is independent of divalent metal cations. Catalyzes a reversible aldol reaction between acetaldehyde and D-glyceraldehyde 3-phosphate to generate 2-deoxy-D-ribose 5-phosphate. Could be involved in pentose biosynthesis. The chain is Deoxyribose-phosphate aldolase from Thermococcus kodakarensis (strain ATCC BAA-918 / JCM 12380 / KOD1) (Pyrococcus kodakaraensis (strain KOD1)).